We begin with the raw amino-acid sequence, 606 residues long: MSGKPSKPSSPSSSMLYGSSISAESMKVIAESIGVGSLSDDAAKELAEDVSIKLKRIVQDAAKFMNHAKRQKLSVRDIDMSLKVRNVEPQYGFVAKDFIPFRFASGGGRELHFTEDKEIDLGEITSTNSVKIPLDLTLRSHWFVVEGVQPTVPENPPPLSKDSQLLDSVNPVIKMDQGLNKDAAGKPTTGKIHKLKNVETIHVKQLATHELSVEQQLYYKEITEACVGSDEPRRGEALQSLGSDPGLHEMLPRMCTFIAEGVKVNVVQNNLALLIYLMRMVRALLDNPSLFLEKYLHELIPSVMTCIVSKQLCMRPELDNHWALRDFASRLMAQICKNFNTLTNNLQTRVTRIFSKALQNDKTHLSSLYGSIAGLSELGGEVIKVFIIPRLKFISERIEPHLLGTSISNTDKTAAGHIRAMLQKCCPPILRQMRSAPDTAEDYKNDFGFLGPSLCQAVVKVRNAPASSIVTLSSNTINTAPITSAAQTATTIGRVSMPTTQRQGSPGVSSLPQIRAIQANQPAQKFVIVTQNSPQQGQAKVVRRGSSPHSVVLSAASNAASASNSNSSSSGSLLAAAQRSSDNVCVIAGSEAPAVDGITVQSFRAS.

3 positions are modified to phosphoserine: S546, S547, and S550.

This sequence belongs to the TAF6 family. In terms of assembly, belongs to the TFIID complex which is composed of TATA binding protein (Tbp) and a number of TBP-associated factors (TAFs). Taf9 and Taf6 exist as a heterotetramer. Interacts with Taf1.

It is found in the nucleus. In terms of biological role, TFIID is a multimeric protein complex that plays a central role in mediating promoter responses to various activators and repressors. The polypeptide is Transcription initiation factor TFIID subunit 6 (Taf6) (Drosophila melanogaster (Fruit fly)).